The primary structure comprises 82 residues: Defensin-like protein 7 (82 aa).

Residues 1 to 29 (MKSSTTSMQLIPTLFFLTILLASPEMVEG) form the signal peptide. Residue Gln30 is modified to Pyrrolidone carboxylic acid. Intrachain disulfides connect Cys33/Cys77, Cys44/Cys64, Cys50/Cys71, and Cys54/Cys73.

It belongs to the DEFL family. In terms of tissue distribution, expressed in stems, roots, rosette leaves and flower buds.

Its subcellular location is the secreted. The chain is Defensin-like protein 7 (LCR75) from Arabidopsis thaliana (Mouse-ear cress).